A 585-amino-acid polypeptide reads, in one-letter code: Regulator of gene activity (585 aa).

The span at 42-56 (FQTDFANSYPGTANY) shows a compositional bias: polar residues. Disordered regions lie at residues 42–93 (FQTD…GNRN), 148–191 (GGGG…PGSK), and 349–394 (GVGG…KVTN). Residues 58–71 (QAPQQQQQQQQQPQ) show a composition bias toward low complexity. A compositionally biased stretch (polar residues) spans 166–184 (PSLTNARGQNDQTLPQSNP). The span at 349 to 367 (GVGGGLGSGSGSSGSGAGG) shows a compositional bias: gly residues. Residues 372–388 (DNSSNDKLVKSGVQTSP) show a composition bias toward polar residues.

Belongs to the CNOT2/3/5 family. Component of the CCR4-NOT complex composed of at least Pop2/Caf1-55, Ccr4, Not1, Rga/Not2, and Not3. Expressed in heterogeneous levels between adjacent germline stem cells (at protein level).

It localises to the cytoplasm. Functionally, component of the CCR4-NOT complex which is one of the major cellular mRNA deadenylases and is linked to various cellular processes including bulk mRNA degradation, miRNA-mediated repression, translational repression during translational initiation and general transcription regulation. Additional complex functions may be a consequence of its influence on mRNA expression. Essential for viability. Acts as a suppressor of position effect variegation (PEV) at the white locus and regulates the expression of several unrelated genes. Plays a role in germline stem cell differentiation in the ovaries. This Drosophila melanogaster (Fruit fly) protein is Regulator of gene activity.